We begin with the raw amino-acid sequence, 242 residues long: ATP synthase subunit a (242 aa).

Helical transmembrane passes span Ser29 to Tyr49, Phe84 to Thr104, Ile114 to Val134, Phe140 to Ile160, Met181 to Leu201, and Phe203 to Gln223.

It belongs to the ATPase A chain family. As to quaternary structure, F-type ATPases have 2 components, CF(1) - the catalytic core - and CF(0) - the membrane proton channel. CF(1) has five subunits: alpha(3), beta(3), gamma(1), delta(1), epsilon(1). CF(0) has three main subunits: a(1), b(2) and c(9-12). The alpha and beta chains form an alternating ring which encloses part of the gamma chain. CF(1) is attached to CF(0) by a central stalk formed by the gamma and epsilon chains, while a peripheral stalk is formed by the delta and b chains.

The protein resides in the cell membrane. Key component of the proton channel; it plays a direct role in the translocation of protons across the membrane. The chain is ATP synthase subunit a from Rickettsia africae (strain ESF-5).